The primary structure comprises 404 residues: Formate-dependent phosphoribosylglycinamide formyltransferase (404 aa).

Residues 25-26 (EL) and Glu85 contribute to the N(1)-(5-phospho-beta-D-ribosyl)glycinamide site. Residues Arg118, Lys159, 164–169 (SSGKGQ), 199–202 (EGFI), and Glu207 contribute to the ATP site. One can recognise an ATP-grasp domain in the interval 123 to 318 (RLAAEELGLP…EFELHARAIL (196 aa)). Residues Glu277 and Glu289 each coordinate Mg(2+). N(1)-(5-phospho-beta-D-ribosyl)glycinamide-binding positions include Asp296, Lys365, and 372-373 (RR).

Belongs to the PurK/PurT family. In terms of assembly, homodimer.

The catalysed reaction is N(1)-(5-phospho-beta-D-ribosyl)glycinamide + formate + ATP = N(2)-formyl-N(1)-(5-phospho-beta-D-ribosyl)glycinamide + ADP + phosphate + H(+). The protein operates within purine metabolism; IMP biosynthesis via de novo pathway; N(2)-formyl-N(1)-(5-phospho-D-ribosyl)glycinamide from N(1)-(5-phospho-D-ribosyl)glycinamide (formate route): step 1/1. Its function is as follows. Involved in the de novo purine biosynthesis. Catalyzes the transfer of formate to 5-phospho-ribosyl-glycinamide (GAR), producing 5-phospho-ribosyl-N-formylglycinamide (FGAR). Formate is provided by PurU via hydrolysis of 10-formyl-tetrahydrofolate. The protein is Formate-dependent phosphoribosylglycinamide formyltransferase of Burkholderia lata (strain ATCC 17760 / DSM 23089 / LMG 22485 / NCIMB 9086 / R18194 / 383).